The primary structure comprises 191 residues: MQIYQLSGRNVEVTEPMREYVEEKLSRLDRYTDQITDARVTLTVRDVRNNERRNRVEVQLNVPGGIIRAEEHHADMYAAIDKASDVLERQLRKFKTRYMKQRQEGRPEPLPGPAEAEVNAQGSGAAMDDVSEFHPEIVRQKRFELRPMSAEDAVVQMEALGHDFYVFQDLQGQTGVVYRRRDGHYGLIGSS.

Residues 100 to 123 form a disordered region; that stretch reads KQRQEGRPEPLPGPAEAEVNAQGS.

The protein belongs to the HPF/YfiA ribosome-associated protein family. Long HPF subfamily. Interacts with 100S ribosomes.

It is found in the cytoplasm. Functionally, required for dimerization of active 70S ribosomes into 100S ribosomes in stationary phase; 100S ribosomes are translationally inactive and sometimes present during exponential growth. The sequence is that of Ribosome hibernation promotion factor from Deinococcus radiodurans (strain ATCC 13939 / DSM 20539 / JCM 16871 / CCUG 27074 / LMG 4051 / NBRC 15346 / NCIMB 9279 / VKM B-1422 / R1).